Reading from the N-terminus, the 355-residue chain is Neutral protease 2 homolog AFUB_100460 (355 aa).

The N-terminal stretch at 1-19 is a signal peptide; sequence MKITALASAILAVAQGALA. The propeptide occupies 20 to 172; that stretch reads LPARAPALDI…PASIKPLDRR (153 aa). Cystine bridges form between cysteine 179–cysteine 251 and cysteine 258–cysteine 276. Histidine 300 is a binding site for Zn(2+). Glutamate 301 is a catalytic residue. 2 residues coordinate Zn(2+): histidine 304 and aspartate 315.

This sequence belongs to the peptidase M35 family. Zn(2+) is required as a cofactor.

It localises to the secreted. The catalysed reaction is Preferential cleavage of bonds with hydrophobic residues in P1'. Also 3-Asn-|-Gln-4 and 8-Gly-|-Ser-9 bonds in insulin B chain.. Its function is as follows. Secreted metalloproteinase that allows assimilation of proteinaceous substrates. Shows high activities on basic nuclear substrates such as histone and protamine. May be involved in virulence. The polypeptide is Neutral protease 2 homolog AFUB_100460 (Aspergillus fumigatus (strain CBS 144.89 / FGSC A1163 / CEA10) (Neosartorya fumigata)).